Consider the following 249-residue polypeptide: Glucosamine-6-phosphate deaminase (249 aa).

Catalysis depends on D67, which acts as the Proton acceptor; for enolization step. N136 functions as the For ring-opening step in the catalytic mechanism. H138 acts as the Proton acceptor; for ring-opening step in catalysis. Catalysis depends on E143, which acts as the For ring-opening step.

This sequence belongs to the glucosamine/galactosamine-6-phosphate isomerase family. NagB subfamily.

The enzyme catalyses alpha-D-glucosamine 6-phosphate + H2O = beta-D-fructose 6-phosphate + NH4(+). It functions in the pathway amino-sugar metabolism; N-acetylneuraminate degradation; D-fructose 6-phosphate from N-acetylneuraminate: step 5/5. Catalyzes the reversible isomerization-deamination of glucosamine 6-phosphate (GlcN6P) to form fructose 6-phosphate (Fru6P) and ammonium ion. This is Glucosamine-6-phosphate deaminase from Clostridium botulinum (strain Alaska E43 / Type E3).